The primary structure comprises 73 residues: Putative defensin-like protein 277 (73 aa).

Positions Met-1–Ala-24 are cleaved as a signal peptide. Disulfide bonds link Cys-27–Cys-64, Cys-33–Cys-52, Cys-39–Cys-62, and Cys-43–Cys-63.

It belongs to the DEFL family.

It localises to the secreted. In Arabidopsis thaliana (Mouse-ear cress), this protein is Putative defensin-like protein 277.